Reading from the N-terminus, the 293-residue chain is Acetyl-coenzyme A carboxylase carboxyl transferase subunit beta (293 aa).

In terms of domain architecture, CoA carboxyltransferase N-terminal spans 29–293 (LWVKCSECSQ…GVKELAEANI (265 aa)). 4 residues coordinate Zn(2+): Cys-33, Cys-36, Cys-52, and Cys-55. Residues 33–55 (CSECSQVAYRKDLISNFNVCSNC) form a C4-type zinc finger.

It belongs to the AccD/PCCB family. Acetyl-CoA carboxylase is a heterohexamer composed of biotin carboxyl carrier protein (AccB), biotin carboxylase (AccC) and two subunits each of ACCase subunit alpha (AccA) and ACCase subunit beta (AccD). Zn(2+) is required as a cofactor.

Its subcellular location is the cytoplasm. It catalyses the reaction N(6)-carboxybiotinyl-L-lysyl-[protein] + acetyl-CoA = N(6)-biotinyl-L-lysyl-[protein] + malonyl-CoA. Its pathway is lipid metabolism; malonyl-CoA biosynthesis; malonyl-CoA from acetyl-CoA: step 1/1. In terms of biological role, component of the acetyl coenzyme A carboxylase (ACC) complex. Biotin carboxylase (BC) catalyzes the carboxylation of biotin on its carrier protein (BCCP) and then the CO(2) group is transferred by the transcarboxylase to acetyl-CoA to form malonyl-CoA. This chain is Acetyl-coenzyme A carboxylase carboxyl transferase subunit beta, found in Prochlorococcus marinus (strain MIT 9312).